Here is a 191-residue protein sequence, read N- to C-terminus: Protein GrpE (191 aa).

Positions 1–10 are enriched in basic and acidic residues; it reads MNHEEQKVET. Positions 1-28 are disordered; the sequence is MNHEEQKVETMEQVEAQPVEPTDVDSEV.

The protein belongs to the GrpE family. In terms of assembly, homodimer.

It is found in the cytoplasm. Participates actively in the response to hyperosmotic and heat shock by preventing the aggregation of stress-denatured proteins, in association with DnaK and GrpE. It is the nucleotide exchange factor for DnaK and may function as a thermosensor. Unfolded proteins bind initially to DnaJ; upon interaction with the DnaJ-bound protein, DnaK hydrolyzes its bound ATP, resulting in the formation of a stable complex. GrpE releases ADP from DnaK; ATP binding to DnaK triggers the release of the substrate protein, thus completing the reaction cycle. Several rounds of ATP-dependent interactions between DnaJ, DnaK and GrpE are required for fully efficient folding. The chain is Protein GrpE from Aeromonas salmonicida (strain A449).